The primary structure comprises 317 residues: MAPAMGNELQHRTVLLEEAVQALVTRADGVYVDGTFGRGGHSRLVLEKLGESGRLIAFDKDPLAIATAQQITDPRFGIVHESFASLRTAMAERGVGRVSGVLLDLGVSSPQVDDPERGFSFRADGPLDMRMDPTRGESAADWLARATVQELTEVIRDYGEERFAFQIAKALVARRAESDRLGPLVSTGELAQIVANVVKTREKGKDPATRTFQAIRIHINQELAELQVVLEAALSLLEQGGRLVVISFHSLEDRIVKRFMQAHASTPAVDRRLPIRAVDLPSPPLKIIGRVFASDAEVAANPRARSAVMRVAERIAP.

Residues 39–41 (GGH), aspartate 59, phenylalanine 83, aspartate 104, and glutamine 111 each bind S-adenosyl-L-methionine.

Belongs to the methyltransferase superfamily. RsmH family.

It localises to the cytoplasm. The catalysed reaction is cytidine(1402) in 16S rRNA + S-adenosyl-L-methionine = N(4)-methylcytidine(1402) in 16S rRNA + S-adenosyl-L-homocysteine + H(+). Specifically methylates the N4 position of cytidine in position 1402 (C1402) of 16S rRNA. The polypeptide is Ribosomal RNA small subunit methyltransferase H (Paraburkholderia xenovorans (strain LB400)).